Here is a 910-residue protein sequence, read N- to C-terminus: Protein translocase subunit SecA 1 (910 aa).

ATP-binding positions include Q86, 104-108, and D512; that span reads GEGKT. Zn(2+) contacts are provided by C894, C896, C905, and H906.

The protein belongs to the SecA family. As to quaternary structure, monomer and homodimer. Part of the essential Sec protein translocation apparatus which comprises SecA, SecYEG and auxiliary proteins SecDF-YajC and YidC. Requires Zn(2+) as cofactor.

The protein resides in the cell inner membrane. The protein localises to the cytoplasm. The enzyme catalyses ATP + H2O + cellular proteinSide 1 = ADP + phosphate + cellular proteinSide 2.. In terms of biological role, part of the Sec protein translocase complex. Interacts with the SecYEG preprotein conducting channel. Has a central role in coupling the hydrolysis of ATP to the transfer of proteins into and across the cell membrane, serving both as a receptor for the preprotein-SecB complex and as an ATP-driven molecular motor driving the stepwise translocation of polypeptide chains across the membrane. The polypeptide is Protein translocase subunit SecA 1 (Bordetella avium (strain 197N)).